The sequence spans 574 residues: Phosphoenolpyruvate-protein phosphotransferase (574 aa).

Catalysis depends on His190, which acts as the Tele-phosphohistidine intermediate. Residues Arg297 and Arg333 each coordinate phosphoenolpyruvate. Mg(2+)-binding residues include Glu432 and Asp456. Phosphoenolpyruvate is bound by residues 455–456 (ND) and Arg466. Residue Cys503 is the Proton donor of the active site.

It belongs to the PEP-utilizing enzyme family. Homodimer. Requires Mg(2+) as cofactor.

It localises to the cytoplasm. It catalyses the reaction L-histidyl-[protein] + phosphoenolpyruvate = N(pros)-phospho-L-histidyl-[protein] + pyruvate. General (non sugar-specific) component of the phosphoenolpyruvate-dependent sugar phosphotransferase system (sugar PTS). This major carbohydrate active-transport system catalyzes the phosphorylation of incoming sugar substrates concomitantly with their translocation across the cell membrane. Enzyme I transfers the phosphoryl group from phosphoenolpyruvate (PEP) to the phosphoryl carrier protein (HPr). The protein is Phosphoenolpyruvate-protein phosphotransferase (ptsI) of Latilactobacillus sakei (Lactobacillus sakei).